The primary structure comprises 287 residues: Eukaryotic translation initiation factor 3 subunit F (287 aa).

The MPN domain maps to 12–142 (VRVHPVVLFQ…IKAYVCVSLG (131 aa)).

It belongs to the eIF-3 subunit F family. As to quaternary structure, component of the eukaryotic translation initiation factor 3 (eIF-3) complex.

Its subcellular location is the cytoplasm. In terms of biological role, component of the eukaryotic translation initiation factor 3 (eIF-3) complex, which is involved in protein synthesis of a specialized repertoire of mRNAs and, together with other initiation factors, stimulates binding of mRNA and methionyl-tRNAi to the 40S ribosome. The eIF-3 complex specifically targets and initiates translation of a subset of mRNAs involved in cell proliferation. This chain is Eukaryotic translation initiation factor 3 subunit F, found in Anopheles gambiae (African malaria mosquito).